The chain runs to 1239 residues: WD repeat-containing protein 11 (1239 aa).

WD repeat units lie at residues 63-112 (RHKA…AHCE), 115-158 (EHSK…KLWK), 358-398 (TKTV…SKSS), 476-515 (RMCP…LHKE), 571-610 (NDEP…LLRE), 713-750 (GSMG…SRGV), 752-792 (THRG…MVSS), 798-836 (NVNY…ASYR), and 898-944 (SLSN…IQAF). Residues 1213 to 1239 (EDLSQTEGTGTESSPADDTDNSLVNIE) form a disordered region. Residues 1215-1226 (LSQTEGTGTESS) show a composition bias toward polar residues.

In terms of assembly, component of the complex WDR11.

The protein localises to the cytoplasm. It is found in the cytoskeleton. It localises to the cilium basal body. The protein resides in the nucleus. Its subcellular location is the cilium axoneme. The protein localises to the cytoplasmic vesicle. It is found in the golgi apparatus. It localises to the trans-Golgi network. Functionally, involved in the Hedgehog (Hh) signaling pathway, is essential for normal ciliogenesis. Regulates the proteolytic processing of gli3 and cooperates with the transcription factor emx1 in the induction of downstream Hh pathway gene expression and gonadotropin-releasing hormone production. WDR11 complex facilitates the tethering of Adaptor protein-1 complex (AP-1)-derived vesicles. In Danio rerio (Zebrafish), this protein is WD repeat-containing protein 11 (wdr11).